The primary structure comprises 601 residues: DNA ligase 2 (601 aa).

Glu-263 serves as a coordination point for ATP. The active-site N6-AMP-lysine intermediate is the Lys-265. Residues Arg-270, Arg-285, Glu-314, Phe-354, Arg-432, and Lys-438 each coordinate ATP.

The protein belongs to the ATP-dependent DNA ligase family. Mg(2+) serves as cofactor.

It catalyses the reaction ATP + (deoxyribonucleotide)n-3'-hydroxyl + 5'-phospho-(deoxyribonucleotide)m = (deoxyribonucleotide)n+m + AMP + diphosphate.. DNA ligase that seals nicks in double-stranded DNA during DNA replication, DNA recombination and DNA repair. The chain is DNA ligase 2 from Thermofilum pendens (strain DSM 2475 / Hrk 5).